Consider the following 144-residue polypeptide: MGLIKKFKDYFLEEDYEEYEEYEEEYEEEEEMRQATKANTKSNVVSLQSVQKSSKVVLIEPRAYAEAQEIADHLKNRRAVVVNLQRIQHEQAKRIVDFLSGTVYAIGGDIQQVGTKIFLCTPDNVDVTGSISIDSDDDTSMKRW.

The protein belongs to the SepF family. Homodimer. Interacts with FtsZ.

It localises to the cytoplasm. Cell division protein that is part of the divisome complex and is recruited early to the Z-ring. Probably stimulates Z-ring formation, perhaps through the cross-linking of FtsZ protofilaments. Its function overlaps with FtsA. The sequence is that of Cell division protein SepF from Geobacillus sp. (strain WCH70).